Consider the following 547-residue polypeptide: Agglutinin-1 (547 aa).

The signal sequence occupies residues 1-20; sequence MKFETTKNKLHGNAYYQAQF. Q21 is modified (pyrrolidone carboxylic acid). The active site involves E183. Cystine bridges form between C266-C288, C305-C324, and C348-C365. The propeptide at 279 to 280 is linker peptide; it reads RS. In terms of domain architecture, Ricin B-type lectin 1 spans 292 to 419; it reads YEPTVRIGGR…YRMRQGWRTG (128 aa). The 1-alpha repeat unit spans residues 302–344; it reads DGLCVDVSDNAYNNGNPIILWKCKDQLEVNQLWTLKSDKTIRS. Residues 345–385 form a 1-beta repeat; it reads KGKCLTTYGYAPGNYVMIYDCSSAVAEATYWDIWDNGTIIN. N-linked (GlcNAc...) asparagine glycosylation is found at N380 and N420. The 1-gamma repeat unit spans residues 388–420; sequence SGLVLSAESSSMGGTLTVQKNDYRMRQGWRTGN. The Ricin B-type lectin 2 domain maps to 422-546; sequence TSPFVTSIAG…GNANQMWATL (125 aa). One copy of the 2-alpha repeat lies at 433-468; the sequence is FKLCMEAHGNSMWLDVCDITKEEQQWAVYPDGSIRP. 2 disulfide bridges follow: C436/C449 and C475/C492. Residues 472–511 form a 2-beta repeat; that stretch reads TNNCLTCEEHKQGATIVMMGCSNAWASQRWVFKSDGTIYN. A 2-gamma repeat occupies 514–547; that stretch reads DDMVMDVKSSDPSLKQIILWPYTGNANQMWATLF.

In the N-terminal section; belongs to the ribosome-inactivating protein family. Type 2 RIP subfamily. In terms of assembly, heterotetramer of two A and two B chains.

It carries out the reaction Endohydrolysis of the N-glycosidic bond at one specific adenosine on the 28S rRNA.. The A chain is responsible for inhibiting protein synthesis through the catalytic inactivation of 60S ribosomal subunits by removing adenine from position 4,324 of 28S rRNA. Less toxic than abrin-a. Functionally, the B chain is a galactose-specific lectin that facilitates the binding to the cell membrane that precedes endocytosis. The polypeptide is Agglutinin-1 (Abrus precatorius (Indian licorice)).